The chain runs to 227 residues: 2-C-methyl-D-erythritol 4-phosphate cytidylyltransferase (227 aa).

Belongs to the IspD/TarI cytidylyltransferase family. IspD subfamily.

The enzyme catalyses 2-C-methyl-D-erythritol 4-phosphate + CTP + H(+) = 4-CDP-2-C-methyl-D-erythritol + diphosphate. It functions in the pathway isoprenoid biosynthesis; isopentenyl diphosphate biosynthesis via DXP pathway; isopentenyl diphosphate from 1-deoxy-D-xylulose 5-phosphate: step 2/6. Catalyzes the formation of 4-diphosphocytidyl-2-C-methyl-D-erythritol from CTP and 2-C-methyl-D-erythritol 4-phosphate (MEP). In Bordetella parapertussis (strain 12822 / ATCC BAA-587 / NCTC 13253), this protein is 2-C-methyl-D-erythritol 4-phosphate cytidylyltransferase.